The primary structure comprises 172 residues: MLLNKKNSPIILIGFMGTGKSTIGEYLSLEKQLSFIDLDVYIEIKENKTIPEIFEEVGEIGFRKIEYNYLTECTKKYDVIATGGGVIEYTESLNYLKQYKYIFWLDCDIDVIFKRVTNDKHRPNAIDKSKKQLNNLYLSRISRYNEIAFMKVNSDKTIREIYNEIINYLTCG.

17–22 contacts ATP; that stretch reads GTGKST. Ser-21 lines the Mg(2+) pocket. Substrate is bound by residues Asp-39, Arg-63, and Gly-84. Arg-122 contacts ATP. Residue Arg-140 participates in substrate binding.

This sequence belongs to the shikimate kinase family. Monomer. Mg(2+) is required as a cofactor.

Its subcellular location is the cytoplasm. It catalyses the reaction shikimate + ATP = 3-phosphoshikimate + ADP + H(+). The protein operates within metabolic intermediate biosynthesis; chorismate biosynthesis; chorismate from D-erythrose 4-phosphate and phosphoenolpyruvate: step 5/7. Functionally, catalyzes the specific phosphorylation of the 3-hydroxyl group of shikimic acid using ATP as a cosubstrate. This chain is Shikimate kinase, found in Staphylococcus haemolyticus (strain JCSC1435).